Here is a 575-residue protein sequence, read N- to C-terminus: Melatonin-related receptor (575 aa).

Topologically, residues 1-30 (MGRTLAVPTPYGCIGCKLPQPDYPPALIVF) are extracellular. A helical transmembrane segment spans residues 31 to 51 (MFCAMVITIVVDLIGNSMVIL). Residues 52-64 (AVSKNKKLRNSGN) lie on the Cytoplasmic side of the membrane. The chain crosses the membrane as a helical span at residues 65-85 (VFVVSLSVADMLVAIYPYPLM). The Extracellular segment spans residues 86-103 (LHAMAIGGWDLSKLQCQM). Cys-101 and Cys-178 are disulfide-bonded. Residues 104 to 124 (VGFITGLSVVGSIFNIMAIAI) form a helical membrane-spanning segment. The Cytoplasmic portion of the chain corresponds to 125–143 (NRYCYICHSLQYERIFSVR). Residues 144–164 (NTCIYLAVTWIMTVLAVLPNM) form a helical membrane-spanning segment. At 165–188 (YIGTIEYDPRTYTCIFNYVNNPAF) the chain is on the extracellular side. The helical transmembrane segment at 189 to 209 (AVTIVCIHFVLPLLIVGFCYV) threads the bilayer. Residues 210-239 (KIWTKVLAARDPAGQNPDNQLAEVRNFLTM) are Cytoplasmic-facing. A helical membrane pass occupies residues 240 to 260 (FVIFLLFAVCWCPINALTVLV). The Extracellular segment spans residues 261-273 (AVNPKEMAGKIPN). The helical transmembrane segment at 274–294 (WVYLAAYFIAYFNSCLNAVIY) threads the bilayer. Over 295 to 575 (GVLNENFRRE…VDADSDEMAV (281 aa)) the chain is Cytoplasmic. 2 disordered regions span residues 368–421 (VPLP…TVYP) and 446–474 (SSHP…TGYT). The segment covering 455–474 (PSKTAISPATSFPKPTTGYT) has biased composition (polar residues).

It belongs to the G-protein coupled receptor 1 family. Homodimer, and heterodimer with MTNR1A and MTNR1B. Interacts with KAT5. Interacts with RTN4 isoform A/NOGO-A. Interacts with TGFBR1.

It localises to the cell membrane. G protein-coupled receptor that plays a role in numerous physiological processes including regulation of energy metabolism, neurite outgrowth or cell migration. Promotes self-renewal and neuronal differentiation of neural progenitor cells through activation of the NOTCH and WNT/beta-catenin signaling pathways. Modulates the KAT5-dependent glucocorticoid receptor signaling by modulating KAT5 subcellular compartmentalisation. Also plays a role in the activation TGFBR1 in the absence of TGFBR2 by interfering with FKBP1A binding to TGFBR1, leading to induction of both canonical and non-canonical SMAD signaling pathways resulting in inhibition of proliferation or promotion of migration. The protein is Melatonin-related receptor (GPR50) of Ovis aries (Sheep).